Consider the following 189-residue polypeptide: Transmembrane protein 229b (189 aa).

The Cytoplasmic portion of the chain corresponds to 1–17; that stretch reads MATTVTPEPLTALSRWY. The helical transmembrane segment at 18 to 38 threads the bilayer; it reads LYAIHGYFCEVMFTAAWEFVV. Topologically, residues 39–43 are extracellular; it reads NCNWK. A helical membrane pass occupies residues 44-64; the sequence is FPGVTSVWALFIYGTCILIVE. At 65 to 75 the chain is on the cytoplasmic side; that stretch reads RMYLCLKDRCN. Residues 76-96 traverse the membrane as a helical segment; sequence VLLRCIIYTLWTYFWEFGTGF. Over 97–114 the chain is Extracellular; sequence LLRQFNACPWDYSEFKYN. The helical transmembrane segment at 115 to 135 threads the bilayer; sequence FMGLITAEYAVPWFCASFIVE. The Cytoplasmic segment spans residues 136–189; it reads RLVIRNTLRLRFDEVAESGQAEERLDRGGGGRGGRRGRGARAGATSANGYVKVD. The interval 158–189 is disordered; sequence ERLDRGGGGRGGRRGRGARAGATSANGYVKVD.

The protein belongs to the TMEM229 family.

The protein localises to the membrane. This chain is Transmembrane protein 229b (tmem229b), found in Danio rerio (Zebrafish).